The chain runs to 444 residues: Light-independent protochlorophyllide reductase subunit N (444 aa).

Positions 36, 61, and 118 each coordinate [4Fe-4S] cluster.

The protein belongs to the BchN/ChlN family. As to quaternary structure, protochlorophyllide reductase is composed of three subunits; BchL, BchN and BchB. Forms a heterotetramer of two BchB and two BchN subunits. Requires [4Fe-4S] cluster as cofactor.

It carries out the reaction chlorophyllide a + oxidized 2[4Fe-4S]-[ferredoxin] + 2 ADP + 2 phosphate = protochlorophyllide a + reduced 2[4Fe-4S]-[ferredoxin] + 2 ATP + 2 H2O. It functions in the pathway porphyrin-containing compound metabolism; bacteriochlorophyll biosynthesis (light-independent). In terms of biological role, component of the dark-operative protochlorophyllide reductase (DPOR) that uses Mg-ATP and reduced ferredoxin to reduce ring D of protochlorophyllide (Pchlide) to form chlorophyllide a (Chlide). This reaction is light-independent. The NB-protein (BchN-BchB) is the catalytic component of the complex. The chain is Light-independent protochlorophyllide reductase subunit N from Chloroflexus aurantiacus (strain ATCC 29366 / DSM 635 / J-10-fl).